A 179-amino-acid polypeptide reads, in one-letter code: Large ribosomal subunit protein uL5 (179 aa).

It belongs to the universal ribosomal protein uL5 family. Part of the 50S ribosomal subunit; part of the 5S rRNA/L5/L18/L25 subcomplex. Contacts the 5S rRNA and the P site tRNA. Forms a bridge to the 30S subunit in the 70S ribosome.

Its function is as follows. This is one of the proteins that bind and probably mediate the attachment of the 5S RNA into the large ribosomal subunit, where it forms part of the central protuberance. In the 70S ribosome it contacts protein S13 of the 30S subunit (bridge B1b), connecting the 2 subunits; this bridge is implicated in subunit movement. Contacts the P site tRNA; the 5S rRNA and some of its associated proteins might help stabilize positioning of ribosome-bound tRNAs. This is Large ribosomal subunit protein uL5 from Neisseria meningitidis serogroup C (strain 053442).